The sequence spans 358 residues: Ion-translocating oxidoreductase complex subunit D (358 aa).

Helical transmembrane passes span 19–39, 41–61, 79–99, and 125–145; these read IMLWVILAMMPAFFTQIYYFG, GVVLQSALAIGTAIIAEFIAI, LTALILAMAIPPYAPYWIIII, and IGYVILLISFPLQMTTWMPPI. Residue T186 is modified to FMN phosphoryl threonine. Transmembrane regions (helical) follow at residues 220 to 240, 248 to 268, 271 to 291, 297 to 317, and 321 to 341; these read FAQGWWQINVAFLAGGIFLIL, IPVAMLVTFFCLATATAFTGF, LSAISQLVSGAMMFGAFFIAT, SITPRGKIIFGALVGLFVYLI, and GNYPDGVAFAILLSNICVPLI.

It belongs to the NqrB/RnfD family. The complex is composed of six subunits: RnfA, RnfB, RnfC, RnfD, RnfE and RnfG. FMN serves as cofactor.

It is found in the cell inner membrane. Part of a membrane-bound complex that couples electron transfer with translocation of ions across the membrane. The protein is Ion-translocating oxidoreductase complex subunit D of Haemophilus influenzae (strain 86-028NP).